Reading from the N-terminus, the 78-residue chain is Antitoxin VapB1 (78 aa).

Residues 3–44 (TKVFQSGNSQAVRIPMDFRFDVDTVEIFRKENGDVVLRPVSK) enclose the SpoVT-AbrB domain.

This sequence belongs to the VapB family. Forms multimers, as well forming as a complex with VapC1.

Functionally, antitoxin component of a type II toxin-antitoxin (TA) system. Upon expression in E.coli neutralizes the effect of toxin VapC1. In vitro inhibits the RNase activity of VapC1. In Haemophilus influenzae (strain R2866), this protein is Antitoxin VapB1 (vapB1).